An 802-amino-acid chain; its full sequence is ATP-dependent zinc metalloprotease FTSH 3, mitochondrial (802 aa).

Residues 1 to 21 (MSLSSLSRALARSARSSRQRQ) constitute a mitochondrion transit peptide. Low complexity predominate over residues 1–23 (MSLSSLSRALARSARSSRQRQGS). Disordered regions lie at residues 1-33 (MSLS…GLRA) and 85-120 (DKSK…SGDQ). Basic and acidic residues predominate over residues 85–113 (DKSKKNHGKHSEEENKGKGDESDKSDSKK). Residues 133 to 153 (MIAPLFLFGLLLLSASASSSE) traverse the membrane as a helical segment. ATP is bound at residue 360–367 (GPPGTGKT). His-585 provides a ligand contact to Zn(2+). The active site involves Glu-586. 2 residues coordinate Zn(2+): His-589 and Asp-661. The segment at 773-802 (KQGFQDEDSNRNAELSNADGASSLGEAVAS) is disordered.

This sequence in the N-terminal section; belongs to the AAA ATPase family. It in the C-terminal section; belongs to the peptidase M41 family. Zn(2+) serves as cofactor.

It is found in the mitochondrion inner membrane. Probable ATP-dependent zinc metallopeptidase. The chain is ATP-dependent zinc metalloprotease FTSH 3, mitochondrial (FTSH3) from Oryza sativa subsp. japonica (Rice).